Consider the following 481-residue polypeptide: Pyruvate kinase (481 aa).

A substrate-binding site is contributed by arginine 33. K(+) is bound by residues asparagine 35, serine 37, aspartate 67, and threonine 68. 35 to 38 (NFSH) is a binding site for ATP. Arginine 74 and lysine 155 together coordinate ATP. Glutamate 221 serves as a coordination point for Mg(2+). Positions 244, 245, and 277 each coordinate substrate. Aspartate 245 serves as a coordination point for Mg(2+).

This sequence belongs to the pyruvate kinase family. In terms of assembly, homotetramer. It depends on Mg(2+) as a cofactor. K(+) is required as a cofactor.

It carries out the reaction pyruvate + ATP = phosphoenolpyruvate + ADP + H(+). Its pathway is carbohydrate degradation; glycolysis; pyruvate from D-glyceraldehyde 3-phosphate: step 5/5. In Chlamydia muridarum (strain MoPn / Nigg), this protein is Pyruvate kinase (pyk).